The primary structure comprises 67 residues: Large ribosomal subunit protein uL30 (67 aa).

The protein belongs to the universal ribosomal protein uL30 family. In terms of assembly, part of the 50S ribosomal subunit.

This chain is Large ribosomal subunit protein uL30, found in Sinorhizobium medicae (strain WSM419) (Ensifer medicae).